The chain runs to 542 residues: Glutamyl-tRNA(Gln) amidotransferase subunit B, mitochondrial (542 aa).

The N-terminal 66 residues, 1 to 66 (MRVFRRFYQV…PNSHTSFFDI (66 aa)), are a transit peptide targeting the mitochondrion.

The protein belongs to the GatB/GatE family. GatB subfamily. Subunit of the heterotrimeric GatFAB amidotransferase (AdT) complex, composed of A, B and F subunits.

It localises to the mitochondrion. It carries out the reaction L-glutamyl-tRNA(Gln) + L-glutamine + ATP + H2O = L-glutaminyl-tRNA(Gln) + L-glutamate + ADP + phosphate + H(+). Allows the formation of correctly charged Gln-tRNA(Gln) through the transamidation of misacylated Glu-tRNA(Gln) in the mitochondria. The reaction takes place in the presence of glutamine and ATP through an activated gamma-phospho-Glu-tRNA(Gln). This chain is Glutamyl-tRNA(Gln) amidotransferase subunit B, mitochondrial, found in Zygosaccharomyces rouxii (strain ATCC 2623 / CBS 732 / NBRC 1130 / NCYC 568 / NRRL Y-229).